Here is a 147-residue protein sequence, read N- to C-terminus: uncharacterized protein (147 aa).

One can recognise an HTH marR-type domain in the interval 11 to 147; the sequence is NTSPGFLLWQ…SGLQELLKHE (137 aa). A DNA-binding region (H-T-H motif) is located at residues 61–84; that stretch reads QKKLASFSQTNIMMVSEVVRTLEK.

This is an uncharacterized protein from Bacillus subtilis (strain 168).